A 142-amino-acid chain; its full sequence is Large ribosomal subunit protein uL13 (142 aa).

This sequence belongs to the universal ribosomal protein uL13 family. In terms of assembly, part of the 50S ribosomal subunit.

Its function is as follows. This protein is one of the early assembly proteins of the 50S ribosomal subunit, although it is not seen to bind rRNA by itself. It is important during the early stages of 50S assembly. The chain is Large ribosomal subunit protein uL13 from Saccharophagus degradans (strain 2-40 / ATCC 43961 / DSM 17024).